A 523-amino-acid polypeptide reads, in one-letter code: Cyclin-dependent kinase 17 (523 aa).

At Ser9 the chain carries Phosphoserine. The segment at 30–55 (TIEESSSKDNEPIVKNGRPPTSHSVH) is disordered. Phosphoserine is present on residues Ser80, Ser92, and Ser105. The interval 103–123 (MGSDGESDQASGTSSDEVQSP) is disordered. Over residues 110-123 (DQASGTSSDEVQSP) the composition is skewed to polar residues. 4 positions are modified to phosphoserine: Ser137, Ser146, Ser165, and Ser180. The 282-residue stretch at 192-473 (YIKLEKLGEG…AEEAMKHVYF (282 aa)) folds into the Protein kinase domain. ATP contacts are provided by residues 198 to 206 (LGEGTYATV) and Lys221. Residue Asp313 is the Proton acceptor of the active site. The tract at residues 501-523 (PGFRNSSYPETGHGKNRRQSMLF) is disordered. Basic residues predominate over residues 514–523 (GKNRRQSMLF).

This sequence belongs to the protein kinase superfamily. CMGC Ser/Thr protein kinase family. CDC2/CDKX subfamily. Found in a complex containing CABLES1, CDK16 and TDRD7. Interacts with TDRD7.

The catalysed reaction is L-seryl-[protein] + ATP = O-phospho-L-seryl-[protein] + ADP + H(+). It carries out the reaction L-threonyl-[protein] + ATP = O-phospho-L-threonyl-[protein] + ADP + H(+). Functionally, may play a role in terminally differentiated neurons. Has a Ser/Thr-phosphorylating activity for histone H1. This chain is Cyclin-dependent kinase 17 (Cdk17), found in Mus musculus (Mouse).